A 501-amino-acid chain; its full sequence is Probable cytosol aminopeptidase (501 aa).

The Mn(2+) site is built by Lys268 and Asp273. Lys280 is an active-site residue. Mn(2+) contacts are provided by Asp291, Asp350, and Glu352. Arg354 is an active-site residue.

This sequence belongs to the peptidase M17 family. Mn(2+) is required as a cofactor.

The protein localises to the cytoplasm. The catalysed reaction is Release of an N-terminal amino acid, Xaa-|-Yaa-, in which Xaa is preferably Leu, but may be other amino acids including Pro although not Arg or Lys, and Yaa may be Pro. Amino acid amides and methyl esters are also readily hydrolyzed, but rates on arylamides are exceedingly low.. It carries out the reaction Release of an N-terminal amino acid, preferentially leucine, but not glutamic or aspartic acids.. Presumably involved in the processing and regular turnover of intracellular proteins. Catalyzes the removal of unsubstituted N-terminal amino acids from various peptides. The chain is Probable cytosol aminopeptidase from Pseudoalteromonas atlantica (strain T6c / ATCC BAA-1087).